A 159-amino-acid polypeptide reads, in one-letter code: Large ribosomal subunit protein uL23m (159 aa).

It belongs to the universal ribosomal protein uL23 family. In terms of assembly, component of the mitochondrial ribosome large subunit (39S) which comprises a 16S rRNA and about 50 distinct proteins.

It localises to the mitochondrion. The chain is Large ribosomal subunit protein uL23m (mrpl-23) from Caenorhabditis briggsae.